Reading from the N-terminus, the 264-residue chain is Proliferating cell nuclear antigen 2 (264 aa).

Residues 61–80 (RCDRNLSMGMNLGNMSKMLK) mediate DNA binding.

This sequence belongs to the PCNA family. Homo- and heterotrimer. Interacts with POLH, ATXR5 and ATXR6.

Its subcellular location is the nucleus. In terms of biological role, this protein is an auxiliary protein of DNA polymerase delta and is involved in the control of eukaryotic DNA replication by increasing the polymerase's processibility during elongation of the leading strand. May be involved in UV resistance. This Arabidopsis thaliana (Mouse-ear cress) protein is Proliferating cell nuclear antigen 2 (PCNA2).